The sequence spans 179 residues: Gamma-glutamyl cyclotransferase verK (179 aa).

This sequence belongs to the class-I pyridoxal-phosphate-dependent aminotransferase family.

It catalyses the reaction an alpha-(gamma-L-glutamyl)-L-amino acid = 5-oxo-L-proline + an L-alpha-amino acid. The protein operates within mycotoxin biosynthesis. In terms of biological role, gamma-glutamyl cyclotransferase; part of the gene cluster that mediates the biosynthesis of 11'-deoxyverticillin A, one of the dimeric epipolythiodioxopiperazines (ETPs) from the verticillin family that act as mycotoxins. 11'-deoxyverticillin A is required for normal conidiation. The nonribosomal peptide synthetase verP is speculated to be responsible for condensation of amino acids to form the carbon skeleton of verticillin, whereas the cluster-specific tailoring enzymes are involved in further modifications leading to the production of 11'-deoxyverticillin A. This Clonostachys rogersoniana protein is Gamma-glutamyl cyclotransferase verK.